Here is a 122-residue protein sequence, read N- to C-terminus: Large ribosomal subunit protein uL14 (122 aa).

It belongs to the universal ribosomal protein uL14 family. As to quaternary structure, part of the 50S ribosomal subunit. Forms a cluster with proteins L3 and L19. In the 70S ribosome, L14 and L19 interact and together make contacts with the 16S rRNA in bridges B5 and B8.

Its function is as follows. Binds to 23S rRNA. Forms part of two intersubunit bridges in the 70S ribosome. The protein is Large ribosomal subunit protein uL14 of Picosynechococcus sp. (strain ATCC 27264 / PCC 7002 / PR-6) (Agmenellum quadruplicatum).